A 1371-amino-acid polypeptide reads, in one-letter code: DNA-directed RNA polymerase subunit beta (1371 aa).

It belongs to the RNA polymerase beta chain family. In terms of assembly, the RNAP catalytic core consists of 2 alpha, 1 beta, 1 beta' and 1 omega subunit. When a sigma factor is associated with the core the holoenzyme is formed, which can initiate transcription.

It carries out the reaction RNA(n) + a ribonucleoside 5'-triphosphate = RNA(n+1) + diphosphate. Its function is as follows. DNA-dependent RNA polymerase catalyzes the transcription of DNA into RNA using the four ribonucleoside triphosphates as substrates. This Geobacter sp. (strain M21) protein is DNA-directed RNA polymerase subunit beta.